The sequence spans 419 residues: Histidine--tRNA ligase (419 aa).

It belongs to the class-II aminoacyl-tRNA synthetase family. Homodimer.

It is found in the cytoplasm. The catalysed reaction is tRNA(His) + L-histidine + ATP = L-histidyl-tRNA(His) + AMP + diphosphate + H(+). The protein is Histidine--tRNA ligase of Desulforamulus reducens (strain ATCC BAA-1160 / DSM 100696 / MI-1) (Desulfotomaculum reducens).